The chain runs to 81 residues: uncharacterized protein (81 aa).

One can recognise a SpoVT-AbrB domain in the interval 1–45 (MRTTIDVAGRLVIPKRIRERLGLRGNDQVEITERDGRIEIEPAPT).

This sequence to B.subtilis SpoVT.

This is an uncharacterized protein from Mycobacterium bovis (strain ATCC BAA-935 / AF2122/97).